The sequence spans 690 residues: Protein SPT2 homolog (690 aa).

The interval 1–579 (MDFHNILVMA…PGHRPVFRPQ (579 aa)) is important for interaction with DNA. Residues 40 to 82 (ESAAVQAFLRRKEEEKRKKELEEKRKKERLLAKRIELKHDRKA) adopt a coiled-coil conformation. 2 disordered regions span residues 105-167 (PKKR…APAP) and 186-619 (EIKV…QEEI). The span at 186–228 (EIKVVKKIEERPRTAEELREREYLERKNKRVETQKKKSEKEVK) shows a compositional bias: basic and acidic residues. A compositionally biased stretch (low complexity) spans 229–243 (SAGISSSSKKATSLK). 2 stretches are compositionally biased toward basic and acidic residues: residues 244–259 (ECAD…DKHA) and 271–285 (TDKK…EKHS). Residues 369 to 380 (HETNSSAKRPSS) show a composition bias toward polar residues. The span at 383–396 (GKGGSGHPAGGSSA) shows a compositional bias: gly residues. The segment covering 397-442 (GPGRSSSNSGTGPGRPGSVSSPGPGRQGSSSAAGPGRPSSSSSLGP) has biased composition (low complexity). Gly residues-rich tracts occupy residues 443–457 (GRLG…GRPG), 465–477 (GRPG…GPGR), and 489–521 (LGSG…GPGR). Polar residues predominate over residues 545-565 (VSETISSKNLVTRPSNGQING). An important for interaction with histones region spans residues 580-690 (GIGRPPVGYK…KRQSKKLRTR (111 aa)). Positions 593 to 617 (DDDDDDDEYDSEMDDFIEDEGEPQE) are enriched in acidic residues. Residues 650–690 (REQQKEEARSLRLGVQEDLEELRREEEELKRKRQSKKLRTR) are a coiled coil.

This sequence belongs to the SPT2 family. In terms of assembly, interacts with POLR1A. Interacts with histones. Interacts with a heterotetrameric complex formed by histone H3 and H4, especially when the histone tetramer is not bound to DNA.

The protein resides in the nucleus. Its subcellular location is the nucleolus. Its function is as follows. Histone chaperone that stabilizes pre-existing histone tetramers and regulates replication-independent histone exchange on chromatin. Required for normal chromatin refolding in the coding region of transcribed genes, and for the suppression of spurious transcription. Binds DNA and histones and promotes nucleosome assembly (in vitro). Modulates RNA polymerase 1-mediated transcription. Required for optimal growth in the presence of the DNA damaging agents actinomycin D or mitomycin C (in vitro). Facilitates formation of tetrameric histone complexes containing histone H3 and H4. Modulates RNA polymerase 1-mediated transcription. Binds DNA, with a preference for branched DNA species, such as Y-form DNA and Holliday junction DNA. The sequence is that of Protein SPT2 homolog (SPTY2D1) from Gallus gallus (Chicken).